We begin with the raw amino-acid sequence, 659 residues long: DNA ligase (659 aa).

NAD(+) contacts are provided by residues 31–35, 80–81, and Glu-109; these read DFVYD and SL. The N6-AMP-lysine intermediate role is filled by Lys-111. NAD(+) contacts are provided by Arg-132, Glu-166, Lys-281, and Lys-305. Zn(2+) contacts are provided by Cys-398, Cys-401, Cys-416, and Cys-421. In terms of domain architecture, BRCT spans 581–659; that stretch reads VTTHPFNGKT…EATFKVKINE (79 aa).

This sequence belongs to the NAD-dependent DNA ligase family. LigA subfamily. Requires Mg(2+) as cofactor. The cofactor is Mn(2+).

The catalysed reaction is NAD(+) + (deoxyribonucleotide)n-3'-hydroxyl + 5'-phospho-(deoxyribonucleotide)m = (deoxyribonucleotide)n+m + AMP + beta-nicotinamide D-nucleotide.. DNA ligase that catalyzes the formation of phosphodiester linkages between 5'-phosphoryl and 3'-hydroxyl groups in double-stranded DNA using NAD as a coenzyme and as the energy source for the reaction. It is essential for DNA replication and repair of damaged DNA. The sequence is that of DNA ligase from Acholeplasma laidlawii (strain PG-8A).